A 1182-amino-acid chain; its full sequence is DNA-directed RNA polymerase subunit beta' (1182 aa).

Residues C59, C61, C74, and C77 each coordinate Zn(2+). Positions 449, 451, and 453 each coordinate Mg(2+). Zn(2+) is bound by residues C794, C868, C875, and C878.

This sequence belongs to the RNA polymerase beta' chain family. In terms of assembly, the RNAP catalytic core consists of 2 alpha, 1 beta, 1 beta' and 1 omega subunit. When a sigma factor is associated with the core the holoenzyme is formed, which can initiate transcription. Mg(2+) serves as cofactor. Zn(2+) is required as a cofactor.

The catalysed reaction is RNA(n) + a ribonucleoside 5'-triphosphate = RNA(n+1) + diphosphate. DNA-dependent RNA polymerase catalyzes the transcription of DNA into RNA using the four ribonucleoside triphosphates as substrates. This is DNA-directed RNA polymerase subunit beta' from Clostridium acetobutylicum (strain ATCC 824 / DSM 792 / JCM 1419 / IAM 19013 / LMG 5710 / NBRC 13948 / NRRL B-527 / VKM B-1787 / 2291 / W).